A 366-amino-acid polypeptide reads, in one-letter code: sn-glycerol-3-phosphate import ATP-binding protein UgpC (366 aa).

An ABC transporter domain is found at 4-235 (LSLRNVQKTY…PASTFVAGFI (232 aa)). Residue 37–44 (GPSGCGKS) coordinates ATP.

It belongs to the ABC transporter superfamily. sn-glycerol-3-phosphate importer (TC 3.A.1.1.3) family. The complex is composed of two ATP-binding proteins (UgpC), two transmembrane proteins (UgpA and UgpE) and a solute-binding protein (UgpB).

The protein resides in the cell inner membrane. The enzyme catalyses sn-glycerol 3-phosphate(out) + ATP + H2O = sn-glycerol 3-phosphate(in) + ADP + phosphate + H(+). Part of the ABC transporter complex UgpBAEC involved in sn-glycerol-3-phosphate (G3P) import. Responsible for energy coupling to the transport system. In Cupriavidus necator (strain ATCC 17699 / DSM 428 / KCTC 22496 / NCIMB 10442 / H16 / Stanier 337) (Ralstonia eutropha), this protein is sn-glycerol-3-phosphate import ATP-binding protein UgpC.